The sequence spans 1024 residues: P3N-PIPO polyprotein (1024 aa).

The region spanning 165 to 308 (RMSEASLQLF…KKQSNEIIHY (144 aa)) is the Peptidase S30 domain. Residues His216, Asp225, and Ser259 each act as for P1 proteinase activity in the active site. Residues 360–363 (KITC) carry the Involved in interaction with stylet and aphid transmission motif. The short motif at 619–621 (PTK) is the Involved in virions binding and aphid transmission element. One can recognise a Peptidase C6 domain in the interval 645 to 767 (MFIAKAGYCY…DSNMKTYLVG (123 aa)). Catalysis depends on for helper component proteinase activity residues Cys653 and His726.

It belongs to the potyviridae P3N-PIPO polyprotein family. As to quaternary structure, interacts (via PIPO domain) with host PCaP1 protein; this interaction may help to anchor the movement complex to the plasma membrane from which the complex could move to the plasmodesmata. Potyviral RNA is expressed as two polyproteins which undergo post-translational proteolytic processing. Genome polyprotein is processed by NIa-pro, P1 and HC-pro proteinases resulting in the production of at least ten individual proteins. P3N-PIPO is cleaved by P1 and HC-pro proteinases resulting in the production of three individual proteins. The P1 proteinase and the HC-pro cleave only their respective C-termini autocatalytically.

The protein localises to the host cell junction. It is found in the host plasmodesma. The catalysed reaction is Hydrolyzes a Gly-|-Gly bond at its own C-terminus, commonly in the sequence -Tyr-Xaa-Val-Gly-|-Gly, in the processing of the potyviral polyprotein.. Its function is as follows. Required for aphid transmission and also has proteolytic activity. Only cleaves a Gly-Gly dipeptide at its own C-terminus. Interacts with virions and aphid stylets. Acts as a suppressor of RNA-mediated gene silencing, also known as post-transcriptional gene silencing (PTGS), a mechanism of plant viral defense that limits the accumulation of viral RNAs. May have RNA-binding activity. Functionally, allows efficient cell to cell propagation, by bypassing the host cell wall barrier. Transports viral genome to neighboring plant cells directly through plasmosdesmata, without any budding. This chain is P3N-PIPO polyprotein, found in Plum pox potyvirus (strain D) (PPV).